Consider the following 378-residue polypeptide: Ferredoxin--NADP reductase, root isozyme 1, chloroplastic (378 aa).

The N-terminal 65 residues, 1 to 65 (MALSTTPSQM…KRSTICMSLQ (65 aa)), are a transit peptide targeting the chloroplast. Positions 93–221 (KEPYTATIVS…TGPSGKVMLL (129 aa)) constitute an FAD-binding FR-type domain. Cys-196 and Cys-201 are joined by a disulfide. Residue Ser-197 is modified to Phosphoserine. Residue Thr-229 is modified to Phosphothreonine. 231 to 249 (IMIATGTGVAPYRGYLRRM) provides a ligand contact to NADP(+). A coiled-coil region spans residues 349-373 (LKRVAEERGESWEQKLTQLRKNKQW).

The protein belongs to the ferredoxin--NADP reductase type 1 family. The cofactor is FAD. In terms of tissue distribution, expressed in shoots and roots. Less abundant in roots than RFNR2.

It is found in the plastid. The protein localises to the chloroplast. It catalyses the reaction 2 reduced [2Fe-2S]-[ferredoxin] + NADP(+) + H(+) = 2 oxidized [2Fe-2S]-[ferredoxin] + NADPH. In terms of biological role, maintains the supply of reduced ferredoxin under non-photosynthetic conditions. The protein is Ferredoxin--NADP reductase, root isozyme 1, chloroplastic (RFNR1) of Arabidopsis thaliana (Mouse-ear cress).